Consider the following 490-residue polypeptide: Cytochrome P450 monooxygenase anuE (490 aa).

Cys-405 contacts heme.

Belongs to the cytochrome P450 family. Requires heme as cofactor.

It carries out the reaction 2-hydroxymethyl-3-pentylphenol + reduced [NADPH--hemoprotein reductase] + O2 = (8S)-annullatin E + oxidized [NADPH--hemoprotein reductase] + H2O + H(+). Its pathway is secondary metabolite biosynthesis. Functionally, cytochrome P450 monooxygenase; part of the gene cluster that mediates the biosynthesis of annullatin D, an alkylated aromatic polyketide with a fused dihydrobenzofuran lactone ring system that exhibits potent agonistic activities toward the cannabinoid receptors. Within the pathway, anuE catalyzes the hydroxylation of 2-hydroxymethyl-3-pentylphenol at the side chain to produce (8S)-annullatin E. The annullatin backbone 2-hydroxymethyl-3-pentylphenol is assembled from one acetyl-CoA starter unit and 5 malonyl-CoA elongation units by cooperation of the highly reducing polyketide synthase anuA, the short-chain dehydrogenase anuB and the oxidoreductase anuC, before being hydroxylated at the C-5 alkyl chain by the cytochrome P450 monooxygenase anuE to form (8S)-annullatin E. The prenyltransferase anuH subsequently installs one isoprenyl group at the benzene ring to form (8S)-annullatin J. Enzymatic or nonenzymatic dihydro-benzofuran ring formation between the prenyl and the phenolic hydroxyl groups in (8S)-annullatin J results in two diastereomers (2S,9S)-annullatin H and compound 12. The intermediate (2S,9S)-annullatin H is then converted to (2S,9S)-annullatin D by the FAD-linked oxidoreductase anuG-catalyzed five-member lactone ring formation. The isomer 12 acts as a substrate for the short-chain dehydrogenase anuF and is oxidized to (2R)-annullatin F, which is subsequently acetylated by an acetyltransferase leading to (2R)-annullatin G formation. The remaining enzymes identified within the cluster, anuD, anuI and anuJ, seem not to be involved in annullatin biosynthesis. This chain is Cytochrome P450 monooxygenase anuE, found in Penicillium roqueforti (strain FM164).